A 308-amino-acid polypeptide reads, in one-letter code: Ribosomal RNA large subunit methyltransferase F (308 aa).

This sequence belongs to the methyltransferase superfamily. METTL16/RlmF family.

The protein localises to the cytoplasm. It carries out the reaction adenosine(1618) in 23S rRNA + S-adenosyl-L-methionine = N(6)-methyladenosine(1618) in 23S rRNA + S-adenosyl-L-homocysteine + H(+). Specifically methylates the adenine in position 1618 of 23S rRNA. This is Ribosomal RNA large subunit methyltransferase F from Escherichia coli O17:K52:H18 (strain UMN026 / ExPEC).